We begin with the raw amino-acid sequence, 82 residues long: Consomatin Mao1 (82 aa).

The N-terminal stretch at 1-22 (MQTASWVMVMMMVWITAPLSEG) is a signal peptide. Residues 23–57 (GKLNDVIRGLVPDDVTPQLILRSLFFHRPSDSVVR) constitute a propeptide that is removed on maturation. Cysteines 65 and 70 form a disulfide. Tryptophan 67 bears the D-tryptophan mark. Residues proline 71, proline 72, and proline 74 each carry the 4-hydroxyproline modification. Positions 75–82 (WRRPNGKG) are excised as a propeptide.

It belongs to the conotoxin C superfamily. Consomatin family. As to expression, expressed by the venom duct.

The protein resides in the secreted. Moderately activates human somatostatin receptors (SSTR) with a preferential activation of SSTR1 and SSTR4. In vivo, does not cause behavioral changes in mice within a few minutes of intracranial injection, but causes a progressive loss of movement thereafter. Four to five hours after injection, mice recover, even with the highest dose tested. Shows antinociception and antihyperalgesia activities in two mouse models of acute pain, most probably by acting outside the central nervous system. The protein is Consomatin Mao1 of Conus maioensis (Sea snail).